The following is a 404-amino-acid chain: Tripartite motif-containing 13 (404 aa).

The RING-type zinc finger occupies 10–56; the sequence is CPICCCLFEDPRVLPCSHSFCKKCLEGILDGNRSPTWRPPFKCPTCR. The segment at 87-129 adopts a B box-type zinc-finger fold; it reads PRMSQCRVHSGQPLNIFCATDLKLICGFCATTGDHKGHKFCAL. Residues C92, H95, C115, and H121 each coordinate Zn(2+). A helical membrane pass occupies residues 102–119; that stretch reads IFCATDLKLICGFCATTG. Residues 186-236 adopt a coiled-coil conformation; sequence KLLRTLEHKRSEILSDLETLKLAVMQTFDPEINRLRSALEEQRRALNIAES.

Its subcellular location is the endoplasmic reticulum membrane. It participates in protein modification; protein ubiquitination. Functionally, E3 ubiquitin ligase involved in the retrotranslocation and turnover of membrane and secretory proteins from the ER through a set of processes named ER-associated degradation (ERAD). This process acts on misfolded proteins as well as in the regulated degradation of correctly folded proteins. The protein is Tripartite motif-containing 13 (trim13) of Danio rerio (Zebrafish).